Here is a 209-residue protein sequence, read N- to C-terminus: Large ribosomal subunit protein uL3 (209 aa).

Q150 carries the N5-methylglutamine modification.

The protein belongs to the universal ribosomal protein uL3 family. As to quaternary structure, part of the 50S ribosomal subunit. Forms a cluster with proteins L14 and L19. Methylated by PrmB.

In terms of biological role, one of the primary rRNA binding proteins, it binds directly near the 3'-end of the 23S rRNA, where it nucleates assembly of the 50S subunit. This chain is Large ribosomal subunit protein uL3, found in Vibrio parahaemolyticus serotype O3:K6 (strain RIMD 2210633).